The following is a 311-amino-acid chain: Probable mitochondrial phosphate carrier protein (311 aa).

The Mitochondrial intermembrane portion of the chain corresponds to 1–23 (MSTPLIPPAPPKKTLQLYTPQYY). Solcar repeat units lie at residues 21–105 (QYYG…FKHK), 118–203 (YRTS…IVEA), and 219–303 (EKIG…FKIM). The chain crosses the membrane as a helical span at residues 24 to 44 (GLCTLGGLLACGTTHSAITPL). Residues 45 to 67 (DLIKCRKQVNPNIYPGNIAGFKT) are Mitochondrial matrix-facing. The helical transmembrane segment at 68 to 88 (ILSKEGLRGLYTGGMPTLIGY) threads the bilayer. Residues 89 to 120 (SLQGCGKYGFYELFKHKYSTLVGAQKAHEYRT) are Mitochondrial intermembrane-facing. A helical membrane pass occupies residues 121–141 (SIYLAASASAELLADIMLCPM). At 142 to 171 (EAIKVRVQTSNPRFANTTREAWSKIVTNEG) the chain is on the mitochondrial matrix side. The helical transmembrane segment at 172 to 192 (FGTLYRGLAPLWFRQIPYTMM) threads the bilayer. Residues 193–220 (KFASFERIVEALYTYIGKPKNMYSKAEK) are Mitochondrial intermembrane-facing. A helical transmembrane segment spans residues 221–241 (IGISFAGGYMAGVLCAIISHP). Residues 242–269 (ADVMVSKLNSNKKAGEGAGAAAARIYKE) are Mitochondrial matrix-facing. A helical membrane pass occupies residues 270-290 (IGFSGLWNGLGVRIVMIGTLT). At 291–311 (GAQWLIYDSFKIMCGFPATGA) the chain is on the mitochondrial intermembrane side.

This sequence belongs to the mitochondrial carrier (TC 2.A.29) family.

The protein resides in the mitochondrion inner membrane. Functionally, transport of phosphate groups from the cytosol to the mitochondrial matrix. In Schizosaccharomyces pombe (strain 972 / ATCC 24843) (Fission yeast), this protein is Probable mitochondrial phosphate carrier protein.